Consider the following 435-residue polypeptide: Transcription factor tau 55 kDa subunit (435 aa).

A disordered region spans residues 362–417; it reads GLLSPTEENETTNAGQSKGSSTANDPNIQIQEEDVGLPDSTNTSRDHTGDKEEVQS. A Phosphoserine modification is found at Ser365. A compositionally biased stretch (polar residues) spans 372 to 391; the sequence is TTNAGQSKGSSTANDPNIQI. The span at 405–417 shows a compositional bias: basic and acidic residues; the sequence is SRDHTGDKEEVQS.

Component of the TFIIIC complex composed of TFC1, TFC3, TFC4, TFC6, TFC7 and TFC8. The subunits are organized in two globular domains, tauA and tauB, connected by a proteolysis-sensitive and flexible linker.

It is found in the nucleus. Its function is as follows. TFIIIC mediates tRNA and 5S RNA gene activation by binding to intragenic promoter elements. Upstream of the transcription start site, TFIIIC assembles the initiation complex TFIIIB-TFIIIC-tDNA, which is sufficient for RNA polymerase III recruitment and function. Part of the tauA domain of TFIIIC that binds boxA DNA promoter sites of tRNA and similar genes. The polypeptide is Transcription factor tau 55 kDa subunit (TFC7) (Saccharomyces cerevisiae (strain ATCC 204508 / S288c) (Baker's yeast)).